A 203-amino-acid polypeptide reads, in one-letter code: Probable GTP-binding protein EngB (203 aa).

The EngB-type G domain occupies 24–199 (DGSEVAFAGR…HTVIETWLGL (176 aa)). Residues 32–39 (GRSNAGKS), 59–63 (GRTQQ), 77–80 (DLPG), 144–147 (TKAD), and 178–180 (FSS) each bind GTP. The Mg(2+) site is built by serine 39 and threonine 61.

It belongs to the TRAFAC class TrmE-Era-EngA-EngB-Septin-like GTPase superfamily. EngB GTPase family. Requires Mg(2+) as cofactor.

In terms of biological role, necessary for normal cell division and for the maintenance of normal septation. The chain is Probable GTP-binding protein EngB from Xylella fastidiosa (strain Temecula1 / ATCC 700964).